Consider the following 273-residue polypeptide: Putative phosphoenolpyruvate synthase regulatory protein (273 aa).

An ADP-binding site is contributed by 153–160 (AVSRAGKT).

It belongs to the pyruvate, phosphate/water dikinase regulatory protein family. PSRP subfamily.

The catalysed reaction is [pyruvate, water dikinase] + ADP = [pyruvate, water dikinase]-phosphate + AMP + H(+). It carries out the reaction [pyruvate, water dikinase]-phosphate + phosphate + H(+) = [pyruvate, water dikinase] + diphosphate. Its function is as follows. Bifunctional serine/threonine kinase and phosphorylase involved in the regulation of the phosphoenolpyruvate synthase (PEPS) by catalyzing its phosphorylation/dephosphorylation. The chain is Putative phosphoenolpyruvate synthase regulatory protein from Xanthomonas campestris pv. campestris (strain ATCC 33913 / DSM 3586 / NCPPB 528 / LMG 568 / P 25).